The sequence spans 237 residues: Mediator of RNA polymerase II transcription subunit 20 (237 aa).

It belongs to the Mediator complex subunit 20 family. As to quaternary structure, component of the Mediator complex.

It localises to the nucleus. Its function is as follows. Component of the Mediator complex, a coactivator involved in the regulated transcription of nearly all RNA polymerase II-dependent genes. Mediator functions as a bridge to convey information from gene-specific regulatory proteins to the basal RNA polymerase II transcription machinery. Mediator is recruited to promoters by direct interactions with regulatory proteins and serves as a scaffold for the assembly of a functional preinitiation complex with RNA polymerase II and the general transcription factors. The chain is Mediator of RNA polymerase II transcription subunit 20 (SRB2) from Scheffersomyces stipitis (strain ATCC 58785 / CBS 6054 / NBRC 10063 / NRRL Y-11545) (Yeast).